Reading from the N-terminus, the 147-residue chain is Globin (147 aa).

One can recognise a Globin domain in the interval 2-147; it reads SFSAAQVDTV…SVANGIGQYQ (146 aa). Positions 64 and 95 each coordinate heme b.

Belongs to the globin family. As to quaternary structure, homodimer or homooligomer.

The polypeptide is Globin (Aequiyoldia eightsii (Antarctic yoldia)).